The primary structure comprises 492 residues: Peptidyl-prolyl cis-trans isomerase-like 4 (492 aa).

A PPIase cyclophilin-type domain is found at 1-161 (MAVLLETTLG…QDIRINHTVI (161 aa)). The interval 167–188 (DDPPDLLIPDRSPEPTREQLDS) is disordered. Positions 177 to 187 (RSPEPTREQLD) are enriched in basic and acidic residues. A Phosphoserine modification is found at S178. T182 carries the post-translational modification Phosphothreonine. Glycyl lysine isopeptide (Lys-Gly) (interchain with G-Cter in SUMO2) cross-links involve residues K201, K212, and K218. The RRM domain maps to 240–318 (NVLFVCKLNP…RRIHVDFSQS (79 aa)). Residues K321 and K362 each participate in a glycyl lysine isopeptide (Lys-Gly) (interchain with G-Cter in SUMO2) cross-link. Disordered regions lie at residues 368-406 (DEQA…PIKN) and 423-492 (EESC…SKYR). A compositionally biased stretch (basic residues) spans 377-390 (SHSHTSKKHKKKTH). S393 is subject to Phosphoserine. K405 participates in a covalent cross-link: Glycyl lysine isopeptide (Lys-Gly) (interchain with G-Cter in SUMO2). Basic and acidic residues predominate over residues 426–452 (CWEKQKSEKRDRTQNRSRSRSRERDGH). K460 participates in a covalent cross-link: Glycyl lysine isopeptide (Lys-Gly) (interchain with G-Cter in SUMO2). Residue S471 is modified to Phosphoserine. A compositionally biased stretch (basic and acidic residues) spans 482-492 (KSKDKEKSKYR).

This sequence belongs to the cyclophilin-type PPIase family. PPIL4 subfamily. As to expression, abundantly expressed in kidney but has a ubiquitously low expression pattern in other adult tissues.

The protein resides in the nucleus. The enzyme catalyses [protein]-peptidylproline (omega=180) = [protein]-peptidylproline (omega=0). PPIases accelerate the folding of proteins. It catalyzes the cis-trans isomerization of proline imidic peptide bonds in oligopeptides. In Homo sapiens (Human), this protein is Peptidyl-prolyl cis-trans isomerase-like 4 (PPIL4).